The following is a 278-amino-acid chain: Large ribosomal subunit protein uL2c (278 aa).

The interval G222–I241 is disordered.

It belongs to the universal ribosomal protein uL2 family. As to quaternary structure, part of the 50S ribosomal subunit.

The protein localises to the plastid. Its subcellular location is the chloroplast. The polypeptide is Large ribosomal subunit protein uL2c (rpl2) (Tupiella akineta (Green alga)).